Reading from the N-terminus, the 213-residue chain is ATP phosphoribosyltransferase (213 aa).

It belongs to the ATP phosphoribosyltransferase family. Short subfamily. In terms of assembly, heteromultimer composed of HisG and HisZ subunits.

It localises to the cytoplasm. The enzyme catalyses 1-(5-phospho-beta-D-ribosyl)-ATP + diphosphate = 5-phospho-alpha-D-ribose 1-diphosphate + ATP. The protein operates within amino-acid biosynthesis; L-histidine biosynthesis; L-histidine from 5-phospho-alpha-D-ribose 1-diphosphate: step 1/9. Catalyzes the condensation of ATP and 5-phosphoribose 1-diphosphate to form N'-(5'-phosphoribosyl)-ATP (PR-ATP). Has a crucial role in the pathway because the rate of histidine biosynthesis seems to be controlled primarily by regulation of HisG enzymatic activity. The protein is ATP phosphoribosyltransferase of Bacillus velezensis (strain DSM 23117 / BGSC 10A6 / LMG 26770 / FZB42) (Bacillus amyloliquefaciens subsp. plantarum).